We begin with the raw amino-acid sequence, 396 residues long: L-lactate dehydrogenase (396 aa).

The 380-residue stretch at 1-380 (MIISAASDYR…TQDSLVQVLG (380 aa)) folds into the FMN hydroxy acid dehydrogenase domain. Tyr-24 provides a ligand contact to substrate. Residues Ser-106 and Gln-127 each coordinate FMN. Residue Tyr-129 coordinates substrate. FMN is bound at residue Thr-155. Arg-164 lines the substrate pocket. Lys-251 is a binding site for FMN. His-275 (proton acceptor) is an active-site residue. Arg-278 contributes to the substrate binding site. An FMN-binding site is contributed by 306–330 (DSGIRNGLDVVRMIALGADTVLLGR).

It belongs to the FMN-dependent alpha-hydroxy acid dehydrogenase family. Requires FMN as cofactor.

The protein localises to the cell inner membrane. The catalysed reaction is (S)-lactate + A = pyruvate + AH2. Its function is as follows. Catalyzes the conversion of L-lactate to pyruvate. Is coupled to the respiratory chain. This is L-lactate dehydrogenase from Escherichia coli O1:K1 / APEC.